The sequence spans 374 residues: MSDNSQKKVIVGMSGGVDSSVSAYLLQQQGYQVEGLFMKNWEEDDNEEYCTAAEDLADAQAVCDKLGIHLHTINFAAEYWDNVFEYFLEEYKAGRTPNPDILCNKEIKFKAFLEFADEVLDADFIAMGHYVRRTFPTAEEIANGVKPQMLRGLDSNKDQSYFLYTLSSEQVARSLFPVGELEKPEVRRIAEEQGLITAKKKDSTGICFIGERKFTEFLGKYLPAQPGNIETPEGKVIGQHQGLMYHTLGQRKGLHIGGTKGGGGNEDPWFVGEKDLKRNVLIAVQGKDHPLLKSQGLLASQLHWVDRTPIKAPLSCTVKTRYRQTDIPCTIIPVDDENIKVIFDEPQIAVTPGQSAVFYLDEVCLGGGIIEERI.

ATP contacts are provided by residues 12 to 19 and Met38; that span reads GMSGGVDS. An interaction with target base in tRNA region spans residues 98–100; it reads NPD. Cys103 functions as the Nucleophile in the catalytic mechanism. The cysteines at positions 103 and 207 are disulfide-linked. An ATP-binding site is contributed by Gly128. Residues 157-159 form an interaction with tRNA region; that stretch reads KDQ. Cys207 (cysteine persulfide intermediate) is an active-site residue. The interaction with tRNA stretch occupies residues 321–322; that stretch reads RY.

This sequence belongs to the MnmA/TRMU family.

The protein localises to the cytoplasm. It carries out the reaction S-sulfanyl-L-cysteinyl-[protein] + uridine(34) in tRNA + AH2 + ATP = 2-thiouridine(34) in tRNA + L-cysteinyl-[protein] + A + AMP + diphosphate + H(+). Catalyzes the 2-thiolation of uridine at the wobble position (U34) of tRNA, leading to the formation of s(2)U34. The chain is tRNA-specific 2-thiouridylase MnmA from Aliivibrio fischeri (strain MJ11) (Vibrio fischeri).